A 512-amino-acid polypeptide reads, in one-letter code: Cytochrome P450 monooxygenase pbrB (512 aa).

A helical transmembrane segment spans residues 6–29 (LSFPAAVGAAFGAFAIYVVARCIY). A heme-binding site is contributed by Cys452.

Belongs to the cytochrome P450 family. It depends on heme as a cofactor.

It localises to the membrane. Its pathway is secondary metabolite biosynthesis; terpenoid biosynthesis. Functionally, cytochrome P450 monooxygenase; part of the gene cluster that mediates the biosynthesis of the sesquiterpenoid aspterric acid (AA), an inhibitor of dihydroxy-acid dehydratase (DHAD) effective as an herbicide. PbrB catalyzes the second step within the pathway and converts (-)-daucane produced by the terpene cyclase pbrA into an alpha-epoxy carboxylate intermediate which is further converted into the tricyclic aspterric acid by the cytochrome P450 monooxygenase pbrC. The chain is Cytochrome P450 monooxygenase pbrB from Penicillium brasilianum.